Consider the following 136-residue polypeptide: Small ribosomal subunit protein uS9 (136 aa).

The segment at 95-136 (GLSPDNRKPLKTEGHLSRDPRSKERKKYGLKKARKAGQFSKR) is disordered. The span at 99–116 (DNRKPLKTEGHLSRDPRS) shows a compositional bias: basic and acidic residues. The span at 117 to 136 (KERKKYGLKKARKAGQFSKR) shows a compositional bias: basic residues.

This sequence belongs to the universal ribosomal protein uS9 family.

The polypeptide is Small ribosomal subunit protein uS9 (Prochlorococcus marinus subsp. pastoris (strain CCMP1986 / NIES-2087 / MED4)).